The sequence spans 392 residues: uncharacterized protein (392 aa).

The protein belongs to the glycosyltransferase group 1 family. Glycosyltransferase 4 subfamily.

This is an uncharacterized protein from Methanocaldococcus jannaschii (strain ATCC 43067 / DSM 2661 / JAL-1 / JCM 10045 / NBRC 100440) (Methanococcus jannaschii).